The sequence spans 202 residues: Sterile alpha motif domain-containing protein 10 (202 aa).

Residues 1 to 22 (MFTELRSKLSPPRARAGAVRPG) are disordered. The region spanning 118–184 (WSQQDVCKWL…LQQVLHLQVR (67 aa)) is the SAM domain.

This chain is Sterile alpha motif domain-containing protein 10, found in Mus musculus (Mouse).